A 412-amino-acid polypeptide reads, in one-letter code: L-cysteine:1D-myo-inositol 2-amino-2-deoxy-alpha-D-glucopyranoside ligase (412 aa).

C43 provides a ligand contact to Zn(2+). L-cysteinyl-5'-AMP contacts are provided by residues 43–46, T58, and 81–83; these read CGIT and NVT. Residues 45 to 55 carry the 'HIGH' region motif; the sequence is ITPYDATHLGH. A 'ERGGDP' region motif is present at residues 187-192; it reads ERGGDP. Residue W227 participates in L-cysteinyl-5'-AMP binding. C231 serves as a coordination point for Zn(2+). 249-251 serves as a coordination point for L-cysteinyl-5'-AMP; that stretch reads GSD. Residue H256 participates in Zn(2+) binding. I283 provides a ligand contact to L-cysteinyl-5'-AMP. Residues 289 to 293 carry the 'KMSKS' region motif; it reads KMSKS.

Belongs to the class-I aminoacyl-tRNA synthetase family. MshC subfamily. As to quaternary structure, monomer. It depends on Zn(2+) as a cofactor.

It catalyses the reaction 1D-myo-inositol 2-amino-2-deoxy-alpha-D-glucopyranoside + L-cysteine + ATP = 1D-myo-inositol 2-(L-cysteinylamino)-2-deoxy-alpha-D-glucopyranoside + AMP + diphosphate + H(+). Catalyzes the ATP-dependent condensation of GlcN-Ins and L-cysteine to form L-Cys-GlcN-Ins. In Saccharopolyspora erythraea (strain ATCC 11635 / DSM 40517 / JCM 4748 / NBRC 13426 / NCIMB 8594 / NRRL 2338), this protein is L-cysteine:1D-myo-inositol 2-amino-2-deoxy-alpha-D-glucopyranoside ligase.